The chain runs to 490 residues: Type I restriction enzyme EcoEI methylase subunit (490 aa).

Residues 163–168 (EFYTPR), 193–195 (TGG), and Glu226 each bind S-adenosyl-L-methionine.

Belongs to the N(4)/N(6)-methyltransferase family. In terms of assembly, the type I restriction/modification system is composed of three polypeptides R, M and S; the restriction enzyme has stoichiometry R(2)M(2)S(1) while the methyltransferase is M(2)S(1).

It carries out the reaction a 2'-deoxyadenosine in DNA + S-adenosyl-L-methionine = an N(6)-methyl-2'-deoxyadenosine in DNA + S-adenosyl-L-homocysteine + H(+). The subtype gamma methyltransferase (M) subunit of a type I restriction enzyme. The M and S subunits together form a methyltransferase (MTase) that methylates two adenine residues of the sequence 5'-GAGN(7)ATGC-3'. In the presence of the R subunit the complex can also act as an endonuclease, binding to the same target sequence but cutting the DNA some distance from this site. Whether the DNA is cut or modified depends on the methylation state of the target sequence. When the target site is unmodified, the DNA is cut. When the target site is hemimethylated, the complex acts as a maintenance MTase modifying the DNA so that both strands become methylated. After locating a non-methylated recognition site, the enzyme complex serves as a molecular motor that translocates DNA in an ATP-dependent manner until a collision occurs that triggers cleavage. This chain is Type I restriction enzyme EcoEI methylase subunit (hsdM), found in Escherichia coli.